Reading from the N-terminus, the 86-residue chain is Evasin-3 (86 aa).

A signal peptide spans 1 to 20 (MRALLARLLLCVLVVSDSKG). 3 disulfide bridges follow: cysteine 42–cysteine 57, cysteine 46–cysteine 59, and cysteine 53–cysteine 70. The N-linked (GlcNAc...) asparagine glycan is linked to asparagine 45. Asparagine 76 carries N-linked (GlcNAc...) asparagine glycosylation.

Monomer.

The protein resides in the secreted. Functionally, salivary chemokine-binding protein which shows chemokine neutralizing activity and binds to host chemokines CXCL1, CXCL2, CXCL3, CXCL5, CXCL6 and CXCL8. Binds to CXCL8 with 1:1 stoichiometry. Disrupts CXCL8 homodimer formation, disrupts the glycosaminoglycan-binding site of CXCL8 and inhibits the interaction of CXCL8 with CXCR2. This Rhipicephalus sanguineus (Brown dog tick) protein is Evasin-3.